A 515-amino-acid polypeptide reads, in one-letter code: Cytochrome P450 monooxygenase mfmA (515 aa).

The helical transmembrane segment at lysine 3 to glycine 23 threads the bilayer. Cysteine 453 contributes to the heme binding site.

This sequence belongs to the cytochrome P450 family. The cofactor is heme.

Its subcellular location is the membrane. It participates in secondary metabolite biosynthesis; terpenoid biosynthesis. Functionally, cytochrome P450 monooxygenase; part of the gene cluster that mediates the biosynthesis of the phthalide-terpenoid hybrid 11'-O-desmethylfendlerol. Within the pathway, mfma and mfmC act together to convert 3,5-dimethylorsellinic acid (DMOA) into the phthalide 5,7-dihydroxy-4-(hydroxymethyl)-6-methylphthalide. MfmA performs especially an hydroxylation at C-9. The biosynthesis of 11'-O-desmethylfendlerol begins with the NR-PKS mfmB that forms 3,5-dimethylorsellinic acid (DMOA), which is then transformed into the phthalide 5,7-dihydroxy-4-(hydroxymethyl)-6-methylphthalide by the cytochrome P450 monooxygenase mfmA and the hydrolase mfmC. Subsequently, the methyltransferase mfmE catalyzes 7-O-methylation to yield 5-hydroxy-4-(hydroxymethyl)-7-methoxy-6-methylphthalide, which undergoes C-3 hydroxylation by the cytochrome P450 monooxygenase mfmF. The resultant cyclopolic acid (2,5-dihydroxy-4-(hydroxymethyl)-7-methoxy-6-methylphthalide) is then farnesylated by the DMATS-type prenyltransferase mfmD to afford 5-O-farnesylcyclopolic acid. Finally, the Pyr4-family terpene cyclase mfmH cyclizes the farnesyl moiety of 5-O-farnesylcyclopolic acid into a drimane-like structure, thus completing the biosynthesis of 11'-O-desmethylfendlerol. This Annulohypoxylon moriforme (Filamentous fungus) protein is Cytochrome P450 monooxygenase mfmA.